The following is an 874-amino-acid chain: Alanine--tRNA ligase (874 aa).

Positions 563, 567, 665, and 669 each coordinate Zn(2+).

The protein belongs to the class-II aminoacyl-tRNA synthetase family. It depends on Zn(2+) as a cofactor.

Its subcellular location is the cytoplasm. It carries out the reaction tRNA(Ala) + L-alanine + ATP = L-alanyl-tRNA(Ala) + AMP + diphosphate. Its function is as follows. Catalyzes the attachment of alanine to tRNA(Ala) in a two-step reaction: alanine is first activated by ATP to form Ala-AMP and then transferred to the acceptor end of tRNA(Ala). Also edits incorrectly charged Ser-tRNA(Ala) and Gly-tRNA(Ala) via its editing domain. The protein is Alanine--tRNA ligase of Actinobacillus pleuropneumoniae serotype 7 (strain AP76).